The chain runs to 79 residues: DNA-directed RNA polymerase subunit omega (79 aa).

The protein belongs to the RNA polymerase subunit omega family. In terms of assembly, the RNAP catalytic core consists of 2 alpha, 1 beta, 1 beta' and 1 omega subunit. When a sigma factor is associated with the core the holoenzyme is formed, which can initiate transcription.

The catalysed reaction is RNA(n) + a ribonucleoside 5'-triphosphate = RNA(n+1) + diphosphate. Functionally, promotes RNA polymerase assembly. Latches the N- and C-terminal regions of the beta' subunit thereby facilitating its interaction with the beta and alpha subunits. The chain is DNA-directed RNA polymerase subunit omega from Thermotoga neapolitana (strain ATCC 49049 / DSM 4359 / NBRC 107923 / NS-E).